The following is a 270-amino-acid chain: Protein-ADP-ribose hydrolase (270 aa).

The Macro domain occupies 73–267 (VSVKDCQKTN…LYDTYLQKEN (195 aa)). The ADP-D-ribose site is built by D92, I93, and N106. The Zn(2+) site is built by C112, H117, and C119. The ADP-D-ribose site is built by C119, I120, D121, S212, T213, G214, E215, and F216.

It belongs to the MacroD-type family. Zn-Macro subfamily. The cofactor is Zn(2+).

The catalysed reaction is 4-O-(ADP-D-ribosyl)-L-aspartyl-[protein] + H2O = L-aspartyl-[protein] + ADP-D-ribose + H(+). Its function is as follows. ADP-ribosylhydrolase that specifically reverses the SirTM-mediated mono-ADP-ribosylation at an asparatate residue of GcvH-L, by releasing ADP-ribose from the target protein. May play a role in the regulation of the response to host-induced oxidative stress. This Streptococcus pyogenes serotype M3 (strain ATCC BAA-595 / MGAS315) protein is Protein-ADP-ribose hydrolase.